Reading from the N-terminus, the 85-residue chain is Beta-mammal/insect toxin Lqhb1 (85 aa).

Residues 1-19 (MKIIIFLIVSSLMLIGVKT) form the signal peptide. In terms of domain architecture, LCN-type CS-alpha/beta spans 20–82 (DNGYLLNKAT…LWAYATNKCN (63 aa)). Disulfide bonds link Cys-31-Cys-81, Cys-35-Cys-56, Cys-42-Cys-63, and Cys-46-Cys-65.

The protein belongs to the long (4 C-C) scorpion toxin superfamily. Sodium channel inhibitor family. Expressed by the venom gland.

It localises to the secreted. Its function is as follows. Beta toxins bind voltage-independently at site-4 of sodium channels (Nav) and shift the voltage of activation toward more negative potentials thereby affecting sodium channel activation and promoting spontaneous and repetitive firing. Competes, with apparent high affinity, with anti-insect and anti-mammalian beta-toxins for binding to cockroach and rat brain synaptosomes, respectively. Also competes with an anti-mammalian alpha-toxin on binding to rat brain sodium channels. Has a weak effect on cardiac sodium channels and a marked effect on rat brain and skeletal muscle sodium channels. This Leiurus hebraeus (Hebrew deathstalker scorpion) protein is Beta-mammal/insect toxin Lqhb1.